A 301-amino-acid chain; its full sequence is Probable alpha-L-glutamate ligase (301 aa).

Residues 104-287 (LQLLSRRGVG…VAGLIIQYLE (184 aa)) enclose the ATP-grasp domain. Residues Lys141, 178–179 (EY), Asp187, and 211–213 (RSN) contribute to the ATP site. Asp248, Glu260, and Asn262 together coordinate Mg(2+). Residues Asp248, Glu260, and Asn262 each contribute to the Mn(2+) site.

It belongs to the RimK family. Mg(2+) is required as a cofactor. It depends on Mn(2+) as a cofactor.

This is Probable alpha-L-glutamate ligase from Stutzerimonas stutzeri (strain A1501) (Pseudomonas stutzeri).